The primary structure comprises 282 residues: Pantothenate synthetase (282 aa).

30–37 (MGYYHAGH) provides a ligand contact to ATP. Catalysis depends on histidine 37, which acts as the Proton donor. Residue glutamine 61 coordinates (R)-pantoate. Glutamine 61 serves as a coordination point for beta-alanine. 147–150 (GQKD) contributes to the ATP binding site. Glutamine 153 lines the (R)-pantoate pocket. ATP is bound by residues valine 176 and 184-187 (LSSR).

The protein belongs to the pantothenate synthetase family. As to quaternary structure, homodimer.

The protein localises to the cytoplasm. The catalysed reaction is (R)-pantoate + beta-alanine + ATP = (R)-pantothenate + AMP + diphosphate + H(+). Its pathway is cofactor biosynthesis; (R)-pantothenate biosynthesis; (R)-pantothenate from (R)-pantoate and beta-alanine: step 1/1. Functionally, catalyzes the condensation of pantoate with beta-alanine in an ATP-dependent reaction via a pantoyl-adenylate intermediate. This is Pantothenate synthetase from Desulfovibrio desulfuricans (strain ATCC 27774 / DSM 6949 / MB).